Reading from the N-terminus, the 223-residue chain is Proteasome subunit beta (223 aa).

The propeptide at Met1–Gly6 is removed in mature form; by autocatalysis. Thr7 serves as the catalytic Nucleophile.

This sequence belongs to the peptidase T1B family. As to quaternary structure, the 20S proteasome core is composed of 14 alpha and 14 beta subunits that assemble into four stacked heptameric rings, resulting in a barrel-shaped structure. The two inner rings, each composed of seven catalytic beta subunits, are sandwiched by two outer rings, each composed of seven alpha subunits. The catalytic chamber with the active sites is on the inside of the barrel. Has a gated structure, the ends of the cylinder being occluded by the N-termini of the alpha-subunits. Is capped at one or both ends by the proteasome regulatory ATPase, PAN.

The protein localises to the cytoplasm. It carries out the reaction Cleavage of peptide bonds with very broad specificity.. With respect to regulation, the formation of the proteasomal ATPase PAN-20S proteasome complex, via the docking of the C-termini of PAN into the intersubunit pockets in the alpha-rings, triggers opening of the gate for substrate entry. Interconversion between the open-gate and close-gate conformations leads to a dynamic regulation of the 20S proteasome proteolysis activity. Functionally, component of the proteasome core, a large protease complex with broad specificity involved in protein degradation. The chain is Proteasome subunit beta from Methanocaldococcus vulcanius (strain ATCC 700851 / DSM 12094 / M7) (Methanococcus vulcanius).